Here is a 122-residue protein sequence, read N- to C-terminus: Large ribosomal subunit protein uL14 (122 aa).

Belongs to the universal ribosomal protein uL14 family. Part of the 50S ribosomal subunit. Forms a cluster with proteins L3 and L19. In the 70S ribosome, L14 and L19 interact and together make contacts with the 16S rRNA in bridges B5 and B8.

Its function is as follows. Binds to 23S rRNA. Forms part of two intersubunit bridges in the 70S ribosome. The polypeptide is Large ribosomal subunit protein uL14 (Parafrankia sp. (strain EAN1pec)).